Reading from the N-terminus, the 301-residue chain is Inosose dehydratase (301 aa).

This sequence belongs to the IolE/MocC family. The cofactor is glutathione. Co(2+) serves as cofactor. Requires Mn(2+) as cofactor.

It catalyses the reaction scyllo-inosose = 3D-3,5/4-trihydroxycyclohexane-1,2-dione + H2O. Its pathway is polyol metabolism; myo-inositol degradation into acetyl-CoA; acetyl-CoA from myo-inositol: step 2/7. Its function is as follows. Catalyzes the dehydration of inosose (2-keto-myo-inositol, 2KMI or 2,4,6/3,5-pentahydroxycyclohexanone) to 3D-(3,5/4)-trihydroxycyclohexane-1,2-dione (D-2,3-diketo-4-deoxy-epi-inositol). The sequence is that of Inosose dehydratase from Lacticaseibacillus casei (strain BL23) (Lactobacillus casei).